A 1195-amino-acid chain; its full sequence is Chromosome partition protein Smc (1195 aa).

Residue 33 to 40 participates in ATP binding; that stretch reads PNGSGKSN. Coiled coils occupy residues 185-241, 273-348, and 380-528; these read GVAQ…RQEQ, DAAT…IQAL, and QYQQ…QETQ. In terms of domain architecture, SMC hinge spans 542–658; sequence PGVHGLVAQL…FERLDQARRY (117 aa). Residues 698–1043 are a coiled coil; it reads GESAEVRAIR…ELLLRIENFT (346 aa).

Belongs to the SMC family. In terms of assembly, homodimer.

The protein resides in the cytoplasm. Required for chromosome condensation and partitioning. This chain is Chromosome partition protein Smc, found in Synechococcus sp. (strain ATCC 27144 / PCC 6301 / SAUG 1402/1) (Anacystis nidulans).